The chain runs to 144 residues: Cystatin-F (144 aa).

The signal sequence occupies residues Met1–Gly18. Residue Asn61 is glycosylated (N-linked (GlcNAc...) asparagine). The short motif at Gln80–Gly84 is the Secondary area of contact element. Disulfide bonds link Cys98-Cys109 and Cys123-Cys143.

The protein belongs to the cystatin family.

It localises to the secreted. Functionally, inhibits papain and cathepsin L but with affinities lower than other cystatins. May play a role in immune regulation through inhibition of a unique target in the hematopoietic system. This is Cystatin-F (Cst7) from Mus musculus (Mouse).